We begin with the raw amino-acid sequence, 178 residues long: Peptide methionine sulfoxide reductase MsrA (178 aa).

Residue cysteine 14 is part of the active site.

This sequence belongs to the MsrA Met sulfoxide reductase family.

The enzyme catalyses L-methionyl-[protein] + [thioredoxin]-disulfide + H2O = L-methionyl-(S)-S-oxide-[protein] + [thioredoxin]-dithiol. The catalysed reaction is [thioredoxin]-disulfide + L-methionine + H2O = L-methionine (S)-S-oxide + [thioredoxin]-dithiol. Functionally, has an important function as a repair enzyme for proteins that have been inactivated by oxidation. Catalyzes the reversible oxidation-reduction of methionine sulfoxide in proteins to methionine. The chain is Peptide methionine sulfoxide reductase MsrA from Bacillus pumilus (strain SAFR-032).